Here is a 393-residue protein sequence, read N- to C-terminus: NAD(P)H-quinone oxidoreductase subunit H, chloroplastic (393 aa).

It belongs to the complex I 49 kDa subunit family. As to quaternary structure, NDH is composed of at least 16 different subunits, 5 of which are encoded in the nucleus.

It localises to the plastid. It is found in the chloroplast thylakoid membrane. The catalysed reaction is a plastoquinone + NADH + (n+1) H(+)(in) = a plastoquinol + NAD(+) + n H(+)(out). It carries out the reaction a plastoquinone + NADPH + (n+1) H(+)(in) = a plastoquinol + NADP(+) + n H(+)(out). In terms of biological role, NDH shuttles electrons from NAD(P)H:plastoquinone, via FMN and iron-sulfur (Fe-S) centers, to quinones in the photosynthetic chain and possibly in a chloroplast respiratory chain. The immediate electron acceptor for the enzyme in this species is believed to be plastoquinone. Couples the redox reaction to proton translocation, and thus conserves the redox energy in a proton gradient. The polypeptide is NAD(P)H-quinone oxidoreductase subunit H, chloroplastic (Barbarea verna (Land cress)).